The primary structure comprises 824 residues: ABC transporter B family member 7 (824 aa).

The segment at 41–101 (RNSVKFNLDT…NKNNKNKINN (61 aa)) is disordered. The segment covering 63–101 (NNNKNNNNNNNNNNNNNNNNNNNNNNNNNNKNNKNKINN) has biased composition (low complexity). Transmembrane regions (helical) follow at residues 164 to 184 (IWYF…QLAL), 252 to 272 (WIII…LLFT), 325 to 345 (LSTL…LVFL), 347 to 367 (WKVT…FLVF), 431 to 451 (AFWI…IYGF), and 461 to 481 (ILLL…NGLI). The ABC transmembrane type-1 domain maps to 167–489 (FVFAFLALSI…LIGSINEIQK (323 aa)). The ABC transporter domain occupies 521–767 (ISFDNVYFNN…STSFYVTSVL (247 aa)). 570 to 576 (GPSQSKE) provides a ligand contact to ATP. Residues 772-813 (NKYNNNNNNNNNNNNNNNNNNNNNNNNNNNNNNNNNNNNINN) are disordered.

This sequence belongs to the ABC transporter superfamily. ABCB family.

It is found in the membrane. The chain is ABC transporter B family member 7 (abcB7) from Dictyostelium discoideum (Social amoeba).